Here is a 229-residue protein sequence, read N- to C-terminus: MKKQGAPVSGGGTERLTKPSCLMVGSAVAEGVSAQSFLHSFTLASSAFNLQVATPGGKALDFVGISETDSRWFQDFQLKPYSNPARLESIDGSRYHALLIPHCPGALTDLANSGYLARILQHFTAEKKPICAIGHGVTALCCATNQDKSWVFQNYSLTGPSVYELVRRPEYASLPLILEDYAKDSGATFSASEPDAIHVVLDRHLITGQNDNSTMPAVQNLILLCNGRK.

A signal peptide spans 1–34; that stretch reads MKKQGAPVSGGGTERLTKPSCLMVGSAVAEGVSA. 2 N-linked (GlcNAc...) asparagine glycosylation sites follow: Asn-154 and Asn-212.

This sequence belongs to the peptidase C56 family. In terms of assembly, homotetramer. Component of the FERRY complex.

Its subcellular location is the secreted. The protein localises to the early endosome. Component of the FERRY complex (Five-subunit Endosomal Rab5 and RNA/ribosome intermediary). The FERRY complex directly interacts with mRNAs and RAB5A, and functions as a RAB5A effector involved in the localization and the distribution of specific mRNAs most likely by mediating their endosomal transport. The complex recruits mRNAs and ribosomes to early endosomes through direct mRNA-interaction. The polypeptide is Glutamine amidotransferase-like class 1 domain-containing protein 1 (Xenopus laevis (African clawed frog)).